The chain runs to 249 residues: Electron transfer flavoprotein subunit beta (249 aa).

This sequence belongs to the ETF beta-subunit/FixA family. In terms of assembly, heterodimer of an alpha and a beta subunit. It depends on FAD as a cofactor. AMP is required as a cofactor.

Its function is as follows. The electron transfer flavoprotein serves as a specific electron acceptor for other dehydrogenases. It transfers the electrons to the main respiratory chain via ETF-ubiquinone oxidoreductase (ETF dehydrogenase). In Pseudomonas aeruginosa (strain ATCC 15692 / DSM 22644 / CIP 104116 / JCM 14847 / LMG 12228 / 1C / PRS 101 / PAO1), this protein is Electron transfer flavoprotein subunit beta (etfB).